Consider the following 267-residue polypeptide: Hydroxyethylthiazole kinase (267 aa).

A substrate-binding site is contributed by M48. ATP-binding residues include R124 and S170. Residue G197 coordinates substrate.

This sequence belongs to the Thz kinase family. Mg(2+) serves as cofactor.

The enzyme catalyses 5-(2-hydroxyethyl)-4-methylthiazole + ATP = 4-methyl-5-(2-phosphooxyethyl)-thiazole + ADP + H(+). It participates in cofactor biosynthesis; thiamine diphosphate biosynthesis; 4-methyl-5-(2-phosphoethyl)-thiazole from 5-(2-hydroxyethyl)-4-methylthiazole: step 1/1. Catalyzes the phosphorylation of the hydroxyl group of 4-methyl-5-beta-hydroxyethylthiazole (THZ). The protein is Hydroxyethylthiazole kinase of Leptospira biflexa serovar Patoc (strain Patoc 1 / Ames).